The sequence spans 259 residues: 5'-nucleotidase SurE (259 aa).

The a divalent metal cation site is built by Asp-15, Asp-16, Ser-46, and Asn-102.

This sequence belongs to the SurE nucleotidase family. A divalent metal cation serves as cofactor.

Its subcellular location is the cytoplasm. It catalyses the reaction a ribonucleoside 5'-phosphate + H2O = a ribonucleoside + phosphate. Nucleotidase that shows phosphatase activity on nucleoside 5'-monophosphates. The sequence is that of 5'-nucleotidase SurE from Chlorobium luteolum (strain DSM 273 / BCRC 81028 / 2530) (Pelodictyon luteolum).